The sequence spans 261 residues: uncharacterized protein (261 aa).

Histidine 7, histidine 9, glutamate 96, histidine 132, histidine 156, and aspartate 211 together coordinate a divalent metal cation.

Belongs to the metallo-dependent hydrolases superfamily. TatD-type hydrolase family. It depends on a divalent metal cation as a cofactor.

This is an uncharacterized protein from Mycoplasma pneumoniae (strain ATCC 29342 / M129 / Subtype 1) (Mycoplasmoides pneumoniae).